The primary structure comprises 1249 residues: Voltage-dependent calcium channel unc-36 (1249 aa).

A signal peptide spans 1 to 19 (MRVVHLLVVLATYVSTTSS). At 20 to 1228 (FNKESIKECA…SENERRPCST (1209 aa)) the chain is on the extracellular side. Residues asparagine 100, asparagine 140, asparagine 146, asparagine 302, asparagine 520, asparagine 558, asparagine 757, asparagine 838, asparagine 903, asparagine 923, and asparagine 1130 are each glycosylated (N-linked (GlcNAc...) asparagine). Positions 250 to 479 (NVLIMLDMSG…EKIHHYIRRM (230 aa)) constitute a VWFA domain. The helical transmembrane segment at 1229-1248 (SPTIVSIFQILFGVFLHFCI) threads the bilayer. Position 1249 (phenylalanine 1249) is a topological domain, cytoplasmic.

Decendants of the cells AB and AB.p (that give rise to nearly all non-pharyngeal neurons), decendants of P1 (that give rise to body muscle) and cell lineages that give rise to the adult and juvenile motor neurons. Expressed in body wall, vulval muscle and pharyngeal muscle.

The protein resides in the membrane. Functionally, may act as an auxiliary subunit of the unc-2 voltage-gated calcium channel which appears to trigger calcium-activated signaling pathways that control the serotonin response. Inhibiting serotonin sensitivity of the vulval muscles results in egg laying defects. May act in both neurons and muscle cells to enhance motor activity as it is required for coordinated movement. Has a role in neural depolarization-induced calcium influx and pharyngeal pumping. Involved in restricting the expression of the putative olfactory receptor str-2 to only one of the two AWC neurons. In Caenorhabditis elegans, this protein is Voltage-dependent calcium channel unc-36 (unc-36).